The sequence spans 461 residues: Chromosomal replication initiator protein DnaA (461 aa).

The segment at 1–83 (MDHSPWQRCL…LRFDVGSKPT (83 aa)) is domain I, interacts with DnaA modulators. Positions 83-124 (TIDNSVTNSPVSRNTGGNESLFAKATSAPKVAEPESNIPKKT) are domain II. A domain III, AAA+ region region spans residues 125–341 (NVRLNYTFEN…GALNRVIANA (217 aa)). ATP is bound by residues Gly169, Gly171, Lys172, and Thr173. Residues 342–461 (NFTGRAITID…YSNLIRTLSS (120 aa)) are domain IV, binds dsDNA.

This sequence belongs to the DnaA family. Oligomerizes as a right-handed, spiral filament on DNA at oriC.

The protein localises to the cytoplasm. Plays an essential role in the initiation and regulation of chromosomal replication. ATP-DnaA binds to the origin of replication (oriC) to initiate formation of the DNA replication initiation complex once per cell cycle. Binds the DnaA box (a 9 base pair repeat at the origin) and separates the double-stranded (ds)DNA. Forms a right-handed helical filament on oriC DNA; dsDNA binds to the exterior of the filament while single-stranded (ss)DNA is stabiized in the filament's interior. The ATP-DnaA-oriC complex binds and stabilizes one strand of the AT-rich DNA unwinding element (DUE), permitting loading of DNA polymerase. After initiation quickly degrades to an ADP-DnaA complex that is not apt for DNA replication. Binds acidic phospholipids. The protein is Chromosomal replication initiator protein DnaA of Colwellia psychrerythraea (strain 34H / ATCC BAA-681) (Vibrio psychroerythus).